The chain runs to 261 residues: Global transcriptional regulator CodY (261 aa).

The GAF domain stretch occupies residues 1 to 159 (MANLLSKTRR…SSTVVGIQLL (159 aa)). The H-T-H motif DNA-binding region spans 207–226 (ASVIADRIGITRSVIVNALR).

Belongs to the CodY family.

It localises to the cytoplasm. Its function is as follows. DNA-binding global transcriptional regulator which is involved in the adaptive response to starvation and acts by directly or indirectly controlling the expression of numerous genes in response to nutrient availability. During rapid exponential growth, CodY is highly active and represses genes whose products allow adaptation to nutrient depletion. This chain is Global transcriptional regulator CodY, found in Streptococcus mutans serotype c (strain ATCC 700610 / UA159).